Here is a 170-residue protein sequence, read N- to C-terminus: MKTLSIEPLTRAAFAPFGDVIETQGAKQIPINLGTTMRFHDLAKIDVADEGGRPLVNLFRGQPRTLPFEVTMLERHPLGSQAFVPLTDRPYIVVVAPAGDLDASKIRAFVTSGWQGVNYAKGVWHHPLIALGEVSDFIVVDRGGDGRNLNEQNLPESLWLTDDALLAVGA.

This sequence belongs to the ureidoglycolate lyase family. In terms of assembly, homodimer. The cofactor is Ni(2+).

It carries out the reaction (S)-ureidoglycolate = urea + glyoxylate. Its pathway is nitrogen metabolism; (S)-allantoin degradation. Functionally, catalyzes the catabolism of the allantoin degradation intermediate (S)-ureidoglycolate, generating urea and glyoxylate. Involved in the utilization of allantoin as nitrogen source. This Burkholderia mallei (strain NCTC 10247) protein is Ureidoglycolate lyase.